A 110-amino-acid chain; its full sequence is Large ribosomal subunit protein uL22 (110 aa).

It belongs to the universal ribosomal protein uL22 family. In terms of assembly, part of the 50S ribosomal subunit.

This protein binds specifically to 23S rRNA; its binding is stimulated by other ribosomal proteins, e.g. L4, L17, and L20. It is important during the early stages of 50S assembly. It makes multiple contacts with different domains of the 23S rRNA in the assembled 50S subunit and ribosome. Functionally, the globular domain of the protein is located near the polypeptide exit tunnel on the outside of the subunit, while an extended beta-hairpin is found that lines the wall of the exit tunnel in the center of the 70S ribosome. This Oleidesulfovibrio alaskensis (strain ATCC BAA-1058 / DSM 17464 / G20) (Desulfovibrio alaskensis) protein is Large ribosomal subunit protein uL22.